The sequence spans 200 residues: ATP synthase subunit s, mitochondrial (200 aa).

Residues 1 to 25 (MMLFGKVSQQLCGIKKLPWSCDSRY) constitute a mitochondrion transit peptide. Residues 1–61 (MMLFGKVSQQ…SEWLLRCGAM (61 aa)) are N-terminal domain. Glycine 59 lines the Mg(2+) pocket. LRR repeat units lie at residues 62–87 (VRYHGQERWQTDYNHLPTGPLDKYKI), 88–116 (QAIDATNSCIMSIGFDHMVGLQHVEKIRL), 117–141 (CKCHFIEDDCLLRLGQLENLQKSIL), and 142–173 (EMEIISCGNITDKGIIASRHLRNLKYLLLSDL). Residue threonine 93 participates in Mg(2+) binding.

Belongs to the ATP synthase subunit s family. In terms of assembly, homotetramer. Associates with ATP synthase.

The protein localises to the mitochondrion. Its subcellular location is the mitochondrion inner membrane. Involved in regulation of mitochondrial membrane ATP synthase. Necessary for H(+) conduction of ATP synthase. Facilitates energy-driven catalysis of ATP synthesis by blocking a proton leak through an alternative proton exit pathway. The protein is ATP synthase subunit s, mitochondrial (DMAC2L) of Macaca fascicularis (Crab-eating macaque).